A 237-amino-acid polypeptide reads, in one-letter code: Purine nucleoside phosphorylase DeoD-type (237 aa).

H4 is a binding site for a purine D-ribonucleoside. Phosphate is bound by residues G20, R24, R43, and 87–90 (RVGT). A purine D-ribonucleoside contacts are provided by residues 179–181 (EME) and 203–204 (SD). Residue D204 is the Proton donor of the active site.

Belongs to the PNP/UDP phosphorylase family. In terms of assembly, homohexamer; trimer of homodimers.

It catalyses the reaction a purine D-ribonucleoside + phosphate = a purine nucleobase + alpha-D-ribose 1-phosphate. It carries out the reaction a purine 2'-deoxy-D-ribonucleoside + phosphate = a purine nucleobase + 2-deoxy-alpha-D-ribose 1-phosphate. In terms of biological role, catalyzes the reversible phosphorolytic breakdown of the N-glycosidic bond in the beta-(deoxy)ribonucleoside molecules, with the formation of the corresponding free purine bases and pentose-1-phosphate. The sequence is that of Purine nucleoside phosphorylase DeoD-type from Streptococcus pyogenes serotype M5 (strain Manfredo).